We begin with the raw amino-acid sequence, 754 residues long: Cytosolic neutral trehalase (754 aa).

The segment covering 1–10 (MDGKVNNNPP) has biased composition (polar residues). 2 disordered regions span residues 1–47 (MDGK…LSKN) and 54–73 (TFSV…YTSP). Ca(2+) is bound by residues aspartate 117, aspartate 119, asparagine 121, glutamine 123, and aspartate 128. Substrate-binding positions include arginine 305, 312-313 (WD), asparagine 349, 358-360 (RSQ), glutamate 427, arginine 476, and glycine 479. Catalysis depends on proton donor/acceptor residues aspartate 481 and glutamate 676.

It belongs to the glycosyl hydrolase 37 family. Ca(2+) is required as a cofactor.

It is found in the cytoplasm. The enzyme catalyses alpha,alpha-trehalose + H2O = alpha-D-glucose + beta-D-glucose. Its pathway is carbohydrate degradation. In terms of biological role, hydrolyzes intracellular trehalose to glucose. The disaccharide trehalose serves as a storage molecule for energy and carbohydrates that is mobilized during nutrient stress. The polypeptide is Cytosolic neutral trehalase (Kluyveromyces lactis (strain ATCC 8585 / CBS 2359 / DSM 70799 / NBRC 1267 / NRRL Y-1140 / WM37) (Yeast)).